A 208-amino-acid chain; its full sequence is Protein-L-isoaspartate O-methyltransferase (208 aa).

Residue serine 59 is part of the active site.

It belongs to the methyltransferase superfamily. L-isoaspartyl/D-aspartyl protein methyltransferase family.

It is found in the cytoplasm. The enzyme catalyses [protein]-L-isoaspartate + S-adenosyl-L-methionine = [protein]-L-isoaspartate alpha-methyl ester + S-adenosyl-L-homocysteine. Its function is as follows. Catalyzes the methyl esterification of L-isoaspartyl residues in peptides and proteins that result from spontaneous decomposition of normal L-aspartyl and L-asparaginyl residues. It plays a role in the repair and/or degradation of damaged proteins. The sequence is that of Protein-L-isoaspartate O-methyltransferase from Aliivibrio fischeri (strain ATCC 700601 / ES114) (Vibrio fischeri).